We begin with the raw amino-acid sequence, 423 residues long: F-box/LRR-repeat protein 2 (423 aa).

The region spanning 9–55 (GLINKKLPKELLLRIFSFLDIVTLCRCAQISKAWNILALDGSNWQRI) is the F-box domain. LRR repeat units follow at residues 61–87 (QTDV…SLRG), 88–113 (CIGV…NLNG), 114–139 (CTKI…DLTS), 140–165 (CVSI…NLSW), 166–191 (CDQI…LLRG), 192–217 (CTQL…NLQS), 218–243 (CSRV…CLSG), 244–269 (CGSL…EAAR), 270–295 (CSHL…DLEE), 296–321 (CILI…SLSH), 322–350 (CELI…ELDN), 351–375 (CLLI…ELYD), and 376–401 (CQQV…AYFA). The tract at residues 80 to 90 (LRKLSLRGCIG) is interaction with Calmodulin. Lys-201 is covalently cross-linked (Glycyl lysine isopeptide (Lys-Gly) (interchain with G-Cter in ubiquitin)). Position 404 is a phosphothreonine (Thr-404). A lipid anchor (S-geranylgeranyl cysteine) is attached at Cys-420. The short motif at 420–423 (CVIL) is the CAAX motif element.

In terms of assembly, part of the SCF (SKP1-CUL1-F-box) E3 ubiquitin-protein ligase complex SCF(FBXL2) composed of CUL1, SKP1, RBX1 and FBXL2. Interacts with calmodulin; may antagonize substrate ubiquitination by SCF(FBXL2). May interact with PIK3R1. Interacts with PTPN13. In terms of processing, phosphorylated by GSK-beta (GSK3B), promoting recognition by FBXO3, leading to its ubiquitination by the SCF(FBXO3) complex. Ubiquitinated at Lys-201 by the SCF(FBXO3) complex in response to lipopolysaccharide (LPS), leading to its degradation by the proteasome.

Its subcellular location is the membrane. It participates in protein modification; protein ubiquitination. Its function is as follows. Calcium-activated substrate recognition component of the SCF (SKP1-cullin-F-box protein) E3 ubiquitin-protein ligase complex, SCF(FBXL2), which mediates the ubiquitination and subsequent proteasomal degradation of target proteins. Unlike many F-box proteins, FBXL2 does not seem to target phosphodegron within its substrates but rather calmodulin-binding motifs and is thereby antagonized by calmodulin. This is the case for the cyclins CCND2 and CCND3 which polyubiquitination and subsequent degradation are inhibited by calmodulin. Through CCND2 and CCND3 degradation induces cell-cycle arrest in G(0). SCF(FBXL2) also mediates PIK3R2 ubiquitination and proteasomal degradation thereby regulating phosphatidylinositol 3-kinase signaling and autophagy. PCYT1A monoubiquitination by SCF(FBXL2) and subsequent degradation regulates synthesis of phosphatidylcholine, which is utilized for formation of membranes and of pulmonary surfactant. The SCF(FBXL2) complex acts as a regulator of inflammation by mediating ubiquitination and degradation of TRAF proteins (TRAF1, TRAF2, TRAF3, TRAF4, TRAF5 and TRAF6). The SCF(FBXL2) complex acts as a negative regulator of the NLRP3 inflammasome by mediating ubiquitination and degradation of NLRP3. This Bos taurus (Bovine) protein is F-box/LRR-repeat protein 2.